A 637-amino-acid polypeptide reads, in one-letter code: 1,4-alpha-glucan branching enzyme GlgB (637 aa).

Asp-307 acts as the Nucleophile in catalysis. Glu-361 acts as the Proton donor in catalysis.

It belongs to the glycosyl hydrolase 13 family. GlgB subfamily. As to quaternary structure, monomer.

The enzyme catalyses Transfers a segment of a (1-&gt;4)-alpha-D-glucan chain to a primary hydroxy group in a similar glucan chain.. The protein operates within glycan biosynthesis; glycogen biosynthesis. Its function is as follows. Catalyzes the formation of the alpha-1,6-glucosidic linkages in glycogen by scission of a 1,4-alpha-linked oligosaccharide from growing alpha-1,4-glucan chains and the subsequent attachment of the oligosaccharide to the alpha-1,6 position. This is 1,4-alpha-glucan branching enzyme GlgB from Oceanobacillus iheyensis (strain DSM 14371 / CIP 107618 / JCM 11309 / KCTC 3954 / HTE831).